A 1134-amino-acid polypeptide reads, in one-letter code: Phospholipid-transporting ATPase IH (1134 aa).

The Cytoplasmic segment spans residues 1-61; it reads MDCSLVRTLV…SSKYTFWNFI (61 aa). The chain crosses the membrane as a helical span at residues 62-82; it reads PKNLFEQFRRVANFYFLIIFL. Residues 83-88 are Extracellular-facing; that stretch reads VQLIID. The helical transmembrane segment at 89-110 threads the bilayer; it reads TPTSPVTSGLPLFFVITVTAIK. At 111–296 the chain is on the cytoplasmic side; that stretch reads QGYEDWLRHK…SAVEKSMNAF (186 aa). Residues 297 to 318 traverse the membrane as a helical segment; the sequence is LIVYLCILISKALINTVLKYMW. Over 319-349 the chain is Extracellular; the sequence is QSEPFRDEPWYNQKTESERQRNLFLKAFTDF. A helical membrane pass occupies residues 350 to 372; sequence LAFMVLFNYIIPVSMYVTVEMQK. Residues 373 to 881 lie on the Cytoplasmic side of the membrane; the sequence is FLGSYFITWD…GHFYYIRISE (509 aa). Aspartate 414 (4-aspartylphosphate intermediate) is an active-site residue. Aspartate 414, lysine 415, threonine 416, glutamate 511, phenylalanine 553, lysine 576, arginine 607, threonine 687, glycine 688, and aspartate 689 together coordinate ATP. Aspartate 414 contributes to the Mg(2+) binding site. Threonine 416 provides a ligand contact to Mg(2+). Phosphoserine is present on serine 738. ATP contacts are provided by arginine 798 and lysine 804. Mg(2+) is bound at residue aspartate 825. ATP-binding residues include asparagine 828 and aspartate 829. Position 829 (aspartate 829) interacts with Mg(2+). Residues 882 to 902 traverse the membrane as a helical segment; that stretch reads LVQYFFYKNVCFIFPQFLYQF. Residues 903–914 are Extracellular-facing; sequence FCGFSQQTLYDT. The chain crosses the membrane as a helical span at residues 915-934; that stretch reads AYLTLYNISFTSLPILLYSL. Over 935–964 the chain is Cytoplasmic; the sequence is MEQHVGIDVLKRDPTLYRDVAKNALLRWRV. The chain crosses the membrane as a helical span at residues 965-986; the sequence is FIYWTLLGLFDALVFFFGAYFV. Residues 987 to 1000 lie on the Extracellular side of the membrane; the sequence is FENTTVTSNGQIFG. A helical membrane pass occupies residues 1001–1023; that stretch reads NWTFGTLVFTVMVFTVTLKLALD. Topologically, residues 1024 to 1029 are cytoplasmic; that stretch reads THYWTW. The helical transmembrane segment at 1030 to 1050 threads the bilayer; the sequence is INHFVIWGSLLFYVVFSLLWG. Residues 1051-1068 are Extracellular-facing; that stretch reads GVIWPFLNYQRMYYVFIQ. The helical transmembrane segment at 1069-1093 threads the bilayer; that stretch reads MLSSGPAWLAIVLLVTISLLPDVLK. The Cytoplasmic segment spans residues 1094-1134; the sequence is KVLCRQLWPTATERVQTKSQCLSVEQSTIFMLSQTSSSLSF.

This sequence belongs to the cation transport ATPase (P-type) (TC 3.A.3) family. Type IV subfamily. As to quaternary structure, component of a P4-ATPase flippase complex which consists of a catalytic alpha subunit ATP11A and an accessory beta subunit TMEM30A. Requires Mg(2+) as cofactor. Proteolytically cleaved by CASP3. In terms of tissue distribution, widely expressed. Expressed in myoblasts.

It localises to the cell membrane. The protein localises to the early endosome. Its subcellular location is the recycling endosome. It is found in the endoplasmic reticulum membrane. It carries out the reaction ATP + H2O + phospholipidSide 1 = ADP + phosphate + phospholipidSide 2.. It catalyses the reaction a 1,2-diacyl-sn-glycero-3-phospho-L-serine(out) + ATP + H2O = a 1,2-diacyl-sn-glycero-3-phospho-L-serine(in) + ADP + phosphate + H(+). The catalysed reaction is a 1,2-diacyl-sn-glycero-3-phosphoethanolamine(out) + ATP + H2O = a 1,2-diacyl-sn-glycero-3-phosphoethanolamine(in) + ADP + phosphate + H(+). Its activity is regulated as follows. The flippase activity is inactivated by caspase-mediated cleavage in apoptotic cells, allowing for PS exposure on the cell surface and engulfment of apoptotic cells by macrophages. The ATPase activity is up-regulated by aminophospholipids PS and PE and down-regulated by increasing intracellular Ca2+ levels. Catalytic component of a P4-ATPase flippase complex which catalyzes the hydrolysis of ATP coupled to the transport of aminophospholipids, phosphatidylserines (PS) and phosphatidylethanolamines (PE), from the outer to the inner leaflet of the plasma membrane. Does not show flippase activity toward phosphatidylcholine (PC). Contributes to the maintenance of membrane lipid asymmetry with a specific role in morphogenesis of muscle cells. In myoblasts, mediates PS enrichment at the inner leaflet of plasma membrane, triggering PIEZO1-dependent Ca2+ influx and Rho GTPases signal transduction, subsequently leading to the assembly of cortical actomyosin fibers and myotube formation. May be involved in the uptake of farnesyltransferase inhibitor drugs, such as lonafarnib. The sequence is that of Phospholipid-transporting ATPase IH (ATP11A) from Homo sapiens (Human).